Reading from the N-terminus, the 239-residue chain is Serine protease SplF (239 aa).

The N-terminal stretch at 1–36 (MNKNIIIKSIAALTILTSITGVGTTVVDGIQQTAKA) is a signal peptide. Residues His75, Asp114, and Ser192 each act as charge relay system in the active site.

The protein belongs to the peptidase S1B family.

The protein resides in the secreted. This is Serine protease SplF (splF) from Staphylococcus aureus (strain MSSA476).